The primary structure comprises 151 residues: Large ribosomal subunit protein bL9 (151 aa).

This sequence belongs to the bacterial ribosomal protein bL9 family.

In terms of biological role, binds to the 23S rRNA. In Pseudothermotoga lettingae (strain ATCC BAA-301 / DSM 14385 / NBRC 107922 / TMO) (Thermotoga lettingae), this protein is Large ribosomal subunit protein bL9.